We begin with the raw amino-acid sequence, 172 residues long: RTX-I toxin-activating lysine-acyltransferase ApxIC (172 aa).

Catalysis depends on residues H24 and D93.

It belongs to the RTX toxin acyltransferase family. As to quaternary structure, homodimer.

The protein resides in the cytoplasm. The enzyme catalyses a fatty acyl-[ACP] + L-lysyl-[protein] = N(6)-(fatty acyl)-L-lysyl-[protein] + holo-[ACP] + H(+). In terms of biological role, protein-lysine acyltransferase that catalyzes fatty acylation of the protoxin, thereby converting it to the active toxin. In Actinobacillus pleuropneumoniae (Haemophilus pleuropneumoniae), this protein is RTX-I toxin-activating lysine-acyltransferase ApxIC.